The primary structure comprises 701 residues: Polyribonucleotide nucleotidyltransferase (701 aa).

2 residues coordinate Mg(2+): Asp487 and Asp493. Positions 554–613 (PTMIAMKIDTDKIRDVIGKGGATIRAICEETKASIDIEDDGSIKIFGETKEAAEAAKQRI) constitute a KH domain. Positions 623 to 691 (GKIYVGKVER…NRGRIKLSIK (69 aa)) constitute an S1 motif domain.

Belongs to the polyribonucleotide nucleotidyltransferase family. Component of the RNA degradosome, which is a multiprotein complex involved in RNA processing and mRNA degradation. Requires Mg(2+) as cofactor.

It is found in the cytoplasm. It carries out the reaction RNA(n+1) + phosphate = RNA(n) + a ribonucleoside 5'-diphosphate. Its function is as follows. Involved in mRNA degradation. Catalyzes the phosphorolysis of single-stranded polyribonucleotides processively in the 3'- to 5'-direction. In Pseudomonas putida (strain GB-1), this protein is Polyribonucleotide nucleotidyltransferase.